The chain runs to 216 residues: Ribosomal RNA small subunit methyltransferase G (216 aa).

S-adenosyl-L-methionine is bound by residues G73, L78, 124-125 (AE), and R139.

Belongs to the methyltransferase superfamily. RNA methyltransferase RsmG family.

The protein localises to the cytoplasm. In terms of biological role, specifically methylates the N7 position of guanine in position 518 of 16S rRNA. In Paenarthrobacter aurescens (strain TC1), this protein is Ribosomal RNA small subunit methyltransferase G.